Reading from the N-terminus, the 183-residue chain is Protein Syd (183 aa).

This sequence belongs to the Syd family.

It localises to the cell inner membrane. Functionally, interacts with the SecY protein in vivo. May bind preferentially to an uncomplexed state of SecY, thus functioning either as a chelating agent for excess SecY in the cell or as a regulatory factor that negatively controls the translocase function. This chain is Protein Syd, found in Yersinia pseudotuberculosis serotype O:1b (strain IP 31758).